We begin with the raw amino-acid sequence, 323 residues long: Protoheme IX farnesyltransferase (323 aa).

The next 8 membrane-spanning stretches (helical) occupy residues 50 to 70 (IVLI…ANTF), 97 to 117 (NRDA…WLWL), 118 to 138 (LCDS…YIFV), 150 to 170 (NIVW…AVIV), 184 to 204 (AIVL…ALAM), 231 to 248 (IVWY…LIPA), 252 to 274 (IYAA…LHLG), and 293 to 313 (YLAV…ETIG).

The protein belongs to the UbiA prenyltransferase family. Protoheme IX farnesyltransferase subfamily.

The protein resides in the cell membrane. It carries out the reaction heme b + (2E,6E)-farnesyl diphosphate + H2O = Fe(II)-heme o + diphosphate. It participates in porphyrin-containing compound metabolism; heme O biosynthesis; heme O from protoheme: step 1/1. Converts heme B (protoheme IX) to heme O by substitution of the vinyl group on carbon 2 of heme B porphyrin ring with a hydroxyethyl farnesyl side group. The protein is Protoheme IX farnesyltransferase of Corynebacterium glutamicum (strain R).